A 260-amino-acid chain; its full sequence is Hydroxyethylthiazole kinase (260 aa).

M38 is a binding site for substrate. 2 residues coordinate ATP: R114 and T159. G186 provides a ligand contact to substrate.

The protein belongs to the Thz kinase family. It depends on Mg(2+) as a cofactor.

It catalyses the reaction 5-(2-hydroxyethyl)-4-methylthiazole + ATP = 4-methyl-5-(2-phosphooxyethyl)-thiazole + ADP + H(+). It participates in cofactor biosynthesis; thiamine diphosphate biosynthesis; 4-methyl-5-(2-phosphoethyl)-thiazole from 5-(2-hydroxyethyl)-4-methylthiazole: step 1/1. In terms of biological role, catalyzes the phosphorylation of the hydroxyl group of 4-methyl-5-beta-hydroxyethylthiazole (THZ). The chain is Hydroxyethylthiazole kinase from Helicobacter pylori (strain G27).